A 495-amino-acid chain; its full sequence is Ubiquinone biosynthesis monooxygenase COQ6, mitochondrial (495 aa).

It belongs to the UbiH/COQ6 family. Component of a multi-subunit COQ enzyme complex. Requires FAD as cofactor.

The protein resides in the mitochondrion inner membrane. It carries out the reaction a 4-hydroxy-3-(all-trans-polyprenyl)benzoate + 2 reduced [2Fe-2S]-[ferredoxin] + O2 + 2 H(+) = a 3,4-dihydroxy-5-(all-trans-polyprenyl)benzoate + 2 oxidized [2Fe-2S]-[ferredoxin] + H2O. The catalysed reaction is a 2-methoxy-6-(all-trans-polyprenyl)phenol + 2 reduced [2Fe-2S]-[ferredoxin] + O2 + 2 H(+) = a 2-methoxy-6-(all-trans-polyprenyl)benzene-1,4-diol + 2 oxidized [2Fe-2S]-[ferredoxin] + H2O. It participates in cofactor biosynthesis; ubiquinone biosynthesis. In terms of biological role, FAD-dependent monooxygenase required for two non-consecutive steps during ubiquinone biosynthesis. Required for the C5-ring hydroxylation during ubiquinone biosynthesis by catalyzing the hydroxylation of 4-hydroxy-3-(all-trans-polyprenyl)benzoic acid to 3,4-dihydroxy-5-(all-trans-polyprenyl)benzoic acid. Also acts downstream of coq4, for the C1-hydroxylation during ubiquinone biosynthesis by catalyzing the hydroxylation of 2-methoxy-6-(all-trans-polyprenyl)phenol to 2-methoxy-6-(all-trans-polyprenyl)benzene-1,4-diol. The electrons required for the hydroxylation reaction are funneled indirectly to coq6 from NADPH via a ferredoxin/ferredoxin reductase system. This Dictyostelium discoideum (Social amoeba) protein is Ubiquinone biosynthesis monooxygenase COQ6, mitochondrial.